The following is a 367-amino-acid chain: ABI gene family member 3 (367 aa).

Positions 36-64 (CEDNYLQATDKRKALEETMAFTTQALASV) form a coiled coil. The segment at 163–273 (LSRTGTLSRK…LEVSQPPLEA (111 aa)) is disordered. Over residues 206-225 (SAASSASSLASAGSAEGASG) the composition is skewed to low complexity. Residues serine 216 and serine 219 each carry the phosphoserine modification. Over residues 236-264 (ATPPPPPVAPVTPPPPPLSAEVFLPPPPL) the composition is skewed to pro residues. One can recognise an SH3 domain in the interval 309 to 367 (SYLEKVVTLYPYTRQKDNELSFSEGTVICVTRRYSDGWCEGVSSEGTGFFPGNYVEPSC). At serine 343 the chain carries Phosphoserine.

This sequence belongs to the ABI family. As to quaternary structure, may interact with PAK1 and PAK2. Probably interacts with TARSH.

Its subcellular location is the cytoplasm. Inhibits ectopic tumor cell metastasis of SRD cells. In vitro, reduces cell motility. This Mus musculus (Mouse) protein is ABI gene family member 3 (Abi3).